The chain runs to 190 residues: Probable gluconokinase (190 aa).

ATP is bound at residue 7-14 (GVSGSGKT).

This sequence belongs to the gluconokinase GntK/GntV family.

The catalysed reaction is D-gluconate + ATP = 6-phospho-D-gluconate + ADP + H(+). The protein operates within carbohydrate acid metabolism; D-gluconate degradation. In Xenopus tropicalis (Western clawed frog), this protein is Probable gluconokinase (idnk).